The sequence spans 69 residues: MSDFENKIEELGGKAKEAVGEATENEQLADEGRADQTKADVKQAVSDAGDKIKGAADKVLGSFQKDEEN.

Basic and acidic residues-rich tracts occupy residues 1–19 (MSDF…KEAV) and 30–41 (DEGRADQTKADV). The segment at 1 to 42 (MSDFENKIEELGGKAKEAVGEATENEQLADEGRADQTKADVK) is disordered.

The protein belongs to the UPF0337 (CsbD) family.

This Corynebacterium diphtheriae (strain ATCC 700971 / NCTC 13129 / Biotype gravis) protein is UPF0337 protein DIP1660.